Here is a 382-residue protein sequence, read N- to C-terminus: Alkanesulfonate monooxygenase (382 aa).

Belongs to the SsuD family.

The enzyme catalyses an alkanesulfonate + FMNH2 + O2 = an aldehyde + FMN + sulfite + H2O + 2 H(+). Catalyzes the desulfonation of aliphatic sulfonates. This Pseudomonas putida (strain GB-1) protein is Alkanesulfonate monooxygenase.